The following is a 355-amino-acid chain: 3-dehydroquinate synthase (355 aa).

NAD(+)-binding positions include glycine 105–aspartate 109, threonine 129–serine 130, lysine 142, lysine 151, and threonine 169–threonine 172. Residues glutamate 184, histidine 246, and histidine 263 each contribute to the Zn(2+) site.

It belongs to the sugar phosphate cyclases superfamily. Dehydroquinate synthase family. NAD(+) is required as a cofactor. Requires Co(2+) as cofactor. It depends on Zn(2+) as a cofactor.

The protein localises to the cytoplasm. The enzyme catalyses 7-phospho-2-dehydro-3-deoxy-D-arabino-heptonate = 3-dehydroquinate + phosphate. It functions in the pathway metabolic intermediate biosynthesis; chorismate biosynthesis; chorismate from D-erythrose 4-phosphate and phosphoenolpyruvate: step 2/7. In terms of biological role, catalyzes the conversion of 3-deoxy-D-arabino-heptulosonate 7-phosphate (DAHP) to dehydroquinate (DHQ). The sequence is that of 3-dehydroquinate synthase from Streptococcus agalactiae serotype V (strain ATCC BAA-611 / 2603 V/R).